The primary structure comprises 610 residues: UvrABC system protein C (610 aa).

Positions 16 to 94 (NQPGVYRMYD…IKRYQPRYNV (79 aa)) constitute a GIY-YIG domain. The 36-residue stretch at 204–239 (SQVIDALVARMEEASRALRFEEAARLRDQIQAVRRV) folds into the UVR domain.

Belongs to the UvrC family. As to quaternary structure, interacts with UvrB in an incision complex.

It localises to the cytoplasm. In terms of biological role, the UvrABC repair system catalyzes the recognition and processing of DNA lesions. UvrC both incises the 5' and 3' sides of the lesion. The N-terminal half is responsible for the 3' incision and the C-terminal half is responsible for the 5' incision. The sequence is that of UvrABC system protein C from Edwardsiella ictaluri (strain 93-146).